Reading from the N-terminus, the 680-residue chain is uncharacterized protein (680 aa).

The protein belongs to the HyuA family.

This is an uncharacterized protein from Methanocaldococcus jannaschii (strain ATCC 43067 / DSM 2661 / JAL-1 / JCM 10045 / NBRC 100440) (Methanococcus jannaschii).